The chain runs to 476 residues: Glutamyl-tRNA(Gln) amidotransferase subunit A (476 aa).

Catalysis depends on charge relay system residues K69 and S144. Residue S168 is the Acyl-ester intermediate of the active site.

This sequence belongs to the amidase family. GatA subfamily. As to quaternary structure, heterotrimer of A, B and C subunits.

It carries out the reaction L-glutamyl-tRNA(Gln) + L-glutamine + ATP + H2O = L-glutaminyl-tRNA(Gln) + L-glutamate + ADP + phosphate + H(+). Its function is as follows. Allows the formation of correctly charged Gln-tRNA(Gln) through the transamidation of misacylated Glu-tRNA(Gln) in organisms which lack glutaminyl-tRNA synthetase. The reaction takes place in the presence of glutamine and ATP through an activated gamma-phospho-Glu-tRNA(Gln). The chain is Glutamyl-tRNA(Gln) amidotransferase subunit A from Sulfolobus acidocaldarius (strain ATCC 33909 / DSM 639 / JCM 8929 / NBRC 15157 / NCIMB 11770).